The following is a 142-amino-acid chain: Universal stress protein G (142 aa).

Belongs to the universal stress protein A family.

This Salmonella typhi protein is Universal stress protein G (uspG).